We begin with the raw amino-acid sequence, 86 residues long: Weak neurotoxin WNTX34 (86 aa).

A signal peptide spans 1 to 21; it reads MKTLLLTLVVVTIVCLDLGYS. 5 disulfides stabilise this stretch: Cys-24-Cys-45, Cys-27-Cys-32, Cys-38-Cys-63, Cys-67-Cys-78, and Cys-79-Cys-84.

It belongs to the three-finger toxin family. Ancestral subfamily. Orphan group II sub-subfamily. In terms of tissue distribution, expressed by the venom gland.

The protein localises to the secreted. Its function is as follows. Binds with low affinity to muscular (alpha-1-beta-1-delta-epsilon/CHRNA1-CHRNB1-CHRND-CHRNE) and very low affinity to neuronal (alpha-7/CHRNA7) nicotinic acetylcholine receptor (nAChR). The polypeptide is Weak neurotoxin WNTX34 (Ophiophagus hannah (King cobra)).